The primary structure comprises 83 residues: Cytochrome b559 subunit alpha (83 aa).

A helical transmembrane segment spans residues 21 to 35; sequence VIHSITIPSLFIAGW. Residue H23 coordinates heme.

It belongs to the PsbE/PsbF family. In terms of assembly, heterodimer of an alpha subunit and a beta subunit. PSII is composed of 1 copy each of membrane proteins PsbA, PsbB, PsbC, PsbD, PsbE, PsbF, PsbH, PsbI, PsbJ, PsbK, PsbL, PsbM, PsbT, PsbX, PsbY, PsbZ, Psb30/Ycf12, at least 3 peripheral proteins of the oxygen-evolving complex and a large number of cofactors. It forms dimeric complexes. Heme b is required as a cofactor.

The protein resides in the plastid. The protein localises to the chloroplast thylakoid membrane. Functionally, this b-type cytochrome is tightly associated with the reaction center of photosystem II (PSII). PSII is a light-driven water:plastoquinone oxidoreductase that uses light energy to abstract electrons from H(2)O, generating O(2) and a proton gradient subsequently used for ATP formation. It consists of a core antenna complex that captures photons, and an electron transfer chain that converts photonic excitation into a charge separation. This is Cytochrome b559 subunit alpha from Chara vulgaris (Common stonewort).